A 261-amino-acid polypeptide reads, in one-letter code: 2,3-dihydro-2,3-dihydroxybenzoate dehydrogenase (261 aa).

An NAD(+)-binding site is contributed by 12-36 (FITGAAQGIGEAVARTLASQGAHIA). Serine 144 is a substrate binding site. Tyrosine 157 serves as the catalytic Proton acceptor.

It belongs to the short-chain dehydrogenases/reductases (SDR) family.

Its subcellular location is the cytoplasm. It carries out the reaction (2S,3S)-2,3-dihydroxy-2,3-dihydrobenzoate + NAD(+) = 2,3-dihydroxybenzoate + NADH + H(+). It participates in siderophore biosynthesis; bacillibactin biosynthesis. The chain is 2,3-dihydro-2,3-dihydroxybenzoate dehydrogenase (dhbA) from Bacillus subtilis (strain 168).